The chain runs to 1668 residues: Kinesin-like protein KIF21B (1668 aa).

Positions 8 to 371 constitute a Kinesin motor domain; it reads CVKVAVRIRP…LKYANRARNI (364 aa). Residue 87 to 94 coordinates ATP; it reads GQTGAGKT. The stretch at 372–465 forms a coiled coil; that stretch reads KNKVVVNQDK…LMSQEANLLL (94 aa). Residues 401-1100 are interaction with TRIM3; the sequence is MEYKAGKRVI…LQALIYNVQH (700 aa). Disordered stretches follow at residues 553-629 and 837-866; these read KKKE…PEEK and RVGL…GARS. A compositionally biased stretch (acidic residues) spans 579 to 628; that stretch reads NSEETDENEAEEEEEERDESGCEEEEGREDEDEDSGSEESLVDSDSDPEE. Ser580 carries the post-translational modification Phosphoserine. At Thr583 the chain carries Phosphothreonine. Positions 847-866 are enriched in low complexity; the sequence is SGAEVSASTTSSEAESGARS. A coiled-coil region spans residues 924 to 1019; the sequence is IIDIVMQRMT…TKEELDSTDT (96 aa). Phosphoserine occurs at positions 1150, 1168, and 1217. The segment covering 1199–1219 has biased composition (polar residues); it reads LPTRGSTFPRQSRGATDTSPL. Positions 1199 to 1253 are disordered; the sequence is LPTRGSTFPRQSRGATDTSPLTRRKSYDRGQPIRSTDMGFTPPSSPPTRPRNDRN. Position 1239 is a phosphothreonine (Thr1239). Ser1243 carries the phosphoserine modification. 7 WD repeats span residues 1308–1345, 1348–1386, 1412–1450, 1453–1495, 1504–1541, 1545–1584, and 1587–1624; these read GHTK…EIAA, GHPN…KCIR, QGEH…PIGK, GHIG…TGTI, PHYD…LIQQ, AHKD…PIGE, and GHDS…TPCL.

This sequence belongs to the TRAFAC class myosin-kinesin ATPase superfamily. Kinesin family. Interacts with TRIM3; the interaction positively affects motility of KIF21B. Interacts with GABARAP and GABA(A) receptor subunits: GABRG2, GABRA1 and GABRA2. May interact with GABA(A) receptor subunits: GABRB2 and GABRB3. Expressed in brain (at protein level). Expressed in spleen and at lower levels in testes.

It localises to the cytoplasm. The protein localises to the cytoskeleton. The protein resides in the cell projection. Its subcellular location is the dendrite. It is found in the growth cone. It localises to the axon. The protein localises to the cytoplasmic vesicle. Plus-end directed microtubule-dependent motor protein which displays processive activity. Is involved in regulation of microtubule dynamics, synapse function and neuronal morphology, including dendritic tree branching and spine formation. Plays a role in lerning and memory. Involved in delivery of gamma-aminobutyric acid (GABA(A)) receptor to cell surface. In Mus musculus (Mouse), this protein is Kinesin-like protein KIF21B (Kif21b).